The chain runs to 209 residues: Small ribosomal subunit protein uS4 (209 aa).

The S4 RNA-binding domain occupies 99–162 (RRLDNVVYRL…RESNKFQEMK (64 aa)).

It belongs to the universal ribosomal protein uS4 family. Part of the 30S ribosomal subunit. Contacts protein S5. The interaction surface between S4 and S5 is involved in control of translational fidelity.

Its function is as follows. One of the primary rRNA binding proteins, it binds directly to 16S rRNA where it nucleates assembly of the body of the 30S subunit. With S5 and S12 plays an important role in translational accuracy. This is Small ribosomal subunit protein uS4 from Syntrophomonas wolfei subsp. wolfei (strain DSM 2245B / Goettingen).